We begin with the raw amino-acid sequence, 70 residues long: Pyruvate-flavodoxin oxidoreductase (70 aa).

This sequence belongs to the pyruvate:ferredoxin/flavodoxin oxidoreductase family.

The enzyme catalyses oxidized [flavodoxin] + pyruvate + CoA + 2 H(+) = reduced [flavodoxin] + acetyl-CoA + CO2. Oxidoreductase required for the transfer of electrons from pyruvate to flavodoxin, which reduces nitrogenase. This is Pyruvate-flavodoxin oxidoreductase (nifJ) from Anabaena variabilis.